A 349-amino-acid chain; its full sequence is MSTLLLNLDFGEPPPKKALEGNAKHRKFVKKRRLLERKGFLNKKKQPPSKVPKLHSEPSQKGETPRVDGTWKATPLPKKKTTAASSSGSEQSLDKKAAVPWLTPAPSQKAGSVVAKVDLLGEFQSALPKIKSHPTRPQKKGSQKNPPPKNGPQNSTHTHSENKYSGVSQKIPGKMVAIDCEMVGTGPKGHVSSLARCSIVNYDGDVLYDEYILPPCHIVDYRTRWSGIRKQHMVNATPFKIARNQILKILAGKIVVGHAIHNDFKALQYIHPKSLTRDTSHIPLLNRKADCPENATMSLKSLTKKLLNRDIQAGKSGHSSVEDAQATMELYKLVEVEWEQHLAQNPPKD.

Disordered regions lie at residues 1–100 (MSTL…AAVP) and 126–166 (ALPK…KYSG). A compositionally biased stretch (basic and acidic residues) spans 14-23 (PPKKALEGNA). The span at 24-47 (KHRKFVKKRRLLERKGFLNKKKQP) shows a compositional bias: basic residues. A compositionally biased stretch (basic and acidic residues) spans 54-66 (LHSEPSQKGETPR). The segment covering 70 to 87 (TWKATPLPKKKTTAASSS) has biased composition (low complexity). Residues 130–142 (IKSHPTRPQKKGS) show a composition bias toward basic residues. The Exonuclease domain occupies 175–331 (MVAIDCEMVG…EDAQATMELY (157 aa)).

The protein resides in the nucleus. It localises to the nucleolus. In terms of biological role, 3'-&gt; 5'-exoribonuclease involved in ribosome biogenesis in the processing of the 12S pre-rRNA. Displays a strong specificity for a 3'-end containing a free hydroxyl group. This is Interferon-stimulated 20 kDa exonuclease-like 2 (ISG20L2) from Bos taurus (Bovine).